Consider the following 636-residue polypeptide: NADP-dependent malic enzyme, chloroplastic (636 aa).

Residues 1–28 (MLSTRTAAVAASASPASPWKLGGRSEGG) form a disordered region. A chloroplast-targeting transit peptide spans 1-62 (MLSTRTAAVA…LPPRRVDAVA (62 aa)). Residues 7–18 (AAVAASASPASP) are compositionally biased toward low complexity. The active-site Proton donor is Tyr184. Arg237 is an NAD(+) binding site. Lys255 functions as the Proton acceptor in the catalytic mechanism. Residues Glu327, Asp328, and Asp351 each coordinate a divalent metal cation. Residue Asp351 coordinates NAD(+). Residue 380-396 (LFLGAGEAGTGIAELIA) participates in NADP(+) binding. Residue Asn492 participates in NAD(+) binding.

The protein belongs to the malic enzymes family. Homotetramer. The cofactor is Mg(2+). Mn(2+) serves as cofactor.

Its subcellular location is the plastid. The protein localises to the chloroplast. The enzyme catalyses (S)-malate + NADP(+) = pyruvate + CO2 + NADPH. It carries out the reaction oxaloacetate + H(+) = pyruvate + CO2. The protein operates within photosynthesis; C4 acid pathway. In terms of biological role, the chloroplastic ME isoform decarboxylates malate shuttled from neighboring mesophyll cells. The CO(2) released is then refixed by ribulose-bisphosphate carboxylase. This pathway eliminates the photorespiratory loss of CO(2) that occurs in most plants. This is NADP-dependent malic enzyme, chloroplastic (MOD1) from Zea mays (Maize).